A 476-amino-acid chain; its full sequence is tRNA(Ile)-lysidine synthase (476 aa).

Position 30–35 (serine 30–serine 35) interacts with ATP.

Belongs to the tRNA(Ile)-lysidine synthase family.

It localises to the cytoplasm. The catalysed reaction is cytidine(34) in tRNA(Ile2) + L-lysine + ATP = lysidine(34) in tRNA(Ile2) + AMP + diphosphate + H(+). Its function is as follows. Ligates lysine onto the cytidine present at position 34 of the AUA codon-specific tRNA(Ile) that contains the anticodon CAU, in an ATP-dependent manner. Cytidine is converted to lysidine, thus changing the amino acid specificity of the tRNA from methionine to isoleucine. The polypeptide is tRNA(Ile)-lysidine synthase (Bacillus anthracis).